A 538-amino-acid chain; its full sequence is Chaperonin GroEL (538 aa).

ATP contacts are provided by residues 29–32 (TLGP), 86–90 (DGTTT), Gly413, 477–479 (NAA), and Asp493.

The protein belongs to the chaperonin (HSP60) family. Forms a cylinder of 14 subunits composed of two heptameric rings stacked back-to-back. Interacts with the co-chaperonin GroES.

It localises to the cytoplasm. The catalysed reaction is ATP + H2O + a folded polypeptide = ADP + phosphate + an unfolded polypeptide.. Its function is as follows. Together with its co-chaperonin GroES, plays an essential role in assisting protein folding. The GroEL-GroES system forms a nano-cage that allows encapsulation of the non-native substrate proteins and provides a physical environment optimized to promote and accelerate protein folding. The sequence is that of Chaperonin GroEL from Scardovia inopinata (Bifidobacterium inopinatum).